The primary structure comprises 208 residues: NAD(P)H-quinone oxidoreductase subunit I (208 aa).

4Fe-4S ferredoxin-type domains follow at residues 55–84 (GRIHYEFDKCIACEVCVRVCPINLPVVDWV) and 95–124 (RNYSIDFGVCIFCGNCVEYCPTNCLSMTEE). Residues Cys-64, Cys-67, Cys-70, Cys-74, Cys-104, Cys-107, Cys-110, and Cys-114 each coordinate [4Fe-4S] cluster.

Belongs to the complex I 23 kDa subunit family. As to quaternary structure, NDH-1 is composed of at least 11 different subunits. It depends on [4Fe-4S] cluster as a cofactor.

It is found in the cellular thylakoid membrane. The enzyme catalyses a plastoquinone + NADH + (n+1) H(+)(in) = a plastoquinol + NAD(+) + n H(+)(out). It catalyses the reaction a plastoquinone + NADPH + (n+1) H(+)(in) = a plastoquinol + NADP(+) + n H(+)(out). Functionally, NDH-1 shuttles electrons from an unknown electron donor, via FMN and iron-sulfur (Fe-S) centers, to quinones in the respiratory and/or the photosynthetic chain. The immediate electron acceptor for the enzyme in this species is believed to be plastoquinone. Couples the redox reaction to proton translocation, and thus conserves the redox energy in a proton gradient. The chain is NAD(P)H-quinone oxidoreductase subunit I from Prochlorococcus marinus (strain MIT 9312).